Here is a 147-residue protein sequence, read N- to C-terminus: MDTLTAIGRWLAKQHVVTWCVHHEGELWCANAFYLFDAQNVALYLLTDDKTRHAQMSGACASVAGTVNGQPKTVARIRGVQFKGEIRRLEGQESDAARKAYLRRFPVARGLPAPVWEIRLDEIKFTDNTLGFGKKLHWLRDSRAQQA.

Belongs to the UPF0306 family.

This Salmonella paratyphi A (strain AKU_12601) protein is UPF0306 protein YhbP.